A 280-amino-acid polypeptide reads, in one-letter code: Bis(5'-nucleosyl)-tetraphosphatase, symmetrical (280 aa).

This sequence belongs to the Ap4A hydrolase family.

It carries out the reaction P(1),P(4)-bis(5'-adenosyl) tetraphosphate + H2O = 2 ADP + 2 H(+). In terms of biological role, hydrolyzes diadenosine 5',5'''-P1,P4-tetraphosphate to yield ADP. The chain is Bis(5'-nucleosyl)-tetraphosphatase, symmetrical from Shigella boydii serotype 18 (strain CDC 3083-94 / BS512).